The chain runs to 354 residues: Serum paraoxonase/arylesterase 2 (354 aa).

C42 and C352 are joined by a disulfide. Ca(2+)-binding residues include E53 and D54. Residue H114 is the Proton acceptor of the active site. 4 residues coordinate Ca(2+): I116, N167, D168, and N223. N254 carries an N-linked (GlcNAc...) asparagine glycan. Residues D268 and N269 each coordinate Ca(2+). N-linked (GlcNAc...) asparagine glycosylation is found at N269 and N323.

The protein belongs to the paraoxonase family. As to quaternary structure, homotrimer. Ca(2+) serves as cofactor. In terms of processing, the signal sequence is not cleaved. In terms of tissue distribution, widely expressed with highest expression in liver, lung, placenta, testis and heart.

Its subcellular location is the membrane. It carries out the reaction a phenyl acetate + H2O = a phenol + acetate + H(+). The catalysed reaction is an N-acyl-L-homoserine lactone + H2O = an N-acyl-L-homoserine + H(+). Functionally, capable of hydrolyzing lactones and a number of aromatic carboxylic acid esters. Has antioxidant activity. Is not associated with high density lipoprotein. Prevents LDL lipid peroxidation, reverses the oxidation of mildly oxidized LDL, and inhibits the ability of MM-LDL to induce monocyte chemotaxis. This chain is Serum paraoxonase/arylesterase 2 (PON2), found in Homo sapiens (Human).